The chain runs to 372 residues: Glutamate 5-kinase (372 aa).

An ATP-binding site is contributed by Lys14. Residues Ser54, Asp141, and Asn153 each coordinate substrate. ATP is bound at residue 173-174 (TD). A PUA domain is found at 280-358 (RGHVVIDAGA…GEIETVLGYM (79 aa)).

This sequence belongs to the glutamate 5-kinase family.

It is found in the cytoplasm. The catalysed reaction is L-glutamate + ATP = L-glutamyl 5-phosphate + ADP. It participates in amino-acid biosynthesis; L-proline biosynthesis; L-glutamate 5-semialdehyde from L-glutamate: step 1/2. Functionally, catalyzes the transfer of a phosphate group to glutamate to form L-glutamate 5-phosphate. This Burkholderia mallei (strain NCTC 10229) protein is Glutamate 5-kinase.